A 188-amino-acid polypeptide reads, in one-letter code: MGIDINHKHDRVARRTAPKSENPYLRLLSKLYAFLARRTGEKFNAIVLKRLRMSRRNRQPLSLAKLARAVQKAGNENKTVVTLSTVTDDARLYTVPKISVAALHVTEGARARILAAGGEIITLDQLALKSPKGENTVFLQGPRSAREAEKHFGPAPGVPHSHTKPYVRSKGRKFERARGRRASRAYKN.

Residues 147–188 (EAEKHFGPAPGVPHSHTKPYVRSKGRKFERARGRRASRAYKN) are disordered. Basic residues-rich tracts occupy residues 161-171 (SHTKPYVRSKG) and 178-188 (RGRRASRAYKN).

The protein belongs to the eukaryotic ribosomal protein eL18 family.

Its subcellular location is the cytoplasm. This Caenorhabditis elegans protein is Large ribosomal subunit protein eL18 (rpl-18).